Reading from the N-terminus, the 518-residue chain is MECDLMETDILESLEDLGYKGPLLEDGALSQAVSAGASSPEFTKLCAWLVSELRVLCKLEENVQATNSPSEAEEFQLEVSGLLGEMNCPYLSLTSGDVTKRLLIQKNCLLLLTYLISELEAARMLCVNAPPKKAQEGGGSEVFQELKGICIALGMSKPPANITMFQFFSGIEKKLKETLAKVPPNHVGKPLLKKPMGPAHWEKIEAINQAIANEYEVRRKLLIKRLDVTVQSFGWSDRAKSQTEKLAKVYQPKRSVLSPKTTISVAHLLAARQDLSKILRTSSGSIREKTACAINKVLMGRVPDRGGRPNEIEPPPPEMPPWQKRQDGPQQQTGGRGGGRGGYEHSSYGGRGGHEQGGGRGGRGGYDHGGRGGGRGNKHQGGWTDGGSGGGGGYQDGGYRDSGFQPGGYHGGHSSGGYQGGGYGGFQTSSSYTGSGYQGGGYQQDNRYQDGGHHGDRGGGRGGRGGRGGRGGRAGQGGGWGGRGSQNYHQGGQFEQHFQHGGYQYNHSGFGQGRHYTS.

Disordered stretches follow at residues 297 to 415 (VLMG…GHSS) and 434 to 518 (GSGY…HYTS). Over residues 302–311 (VPDRGGRPNE) the composition is skewed to basic and acidic residues. 3 stretches are compositionally biased toward gly residues: residues 349 to 364 (GGRG…GGRG), 383 to 396 (WTDG…GYQD), and 405 to 415 (QPGGYHGGHSS). The segment covering 447–459 (RYQDGGHHGDRGG) has biased composition (basic and acidic residues). Over residues 460–484 (GRGGRGGRGGRGGRAGQGGGWGGRG) the composition is skewed to gly residues. Over residues 488–504 (YHQGGQFEQHFQHGGYQ) the composition is skewed to low complexity. A compositionally biased stretch (polar residues) spans 505–518 (YNHSGFGQGRHYTS).

It belongs to the FAM98 family. Interacts (via N- and C-terminus) with DDX1. Interacts (via N- and C-terminus) with C14orf166. Interacts with FAM98B. Interacts with PLEKHM1 (via N- and C-terminus). In terms of tissue distribution, expressed strongly in colorectal cancer cells. Expressed strongly in colorectal cancer tissues compared to wild-type colon samples (at protein level). Expressed strongly in colorectal cancer tissues compared to wild-type colon samples.

In terms of biological role, positively stimulates PRMT1-induced protein arginine methylation. Involved in skeletal homeostasis. Positively regulates lysosome peripheral distribution and ruffled border formation in osteoclasts. The chain is Protein FAM98A from Homo sapiens (Human).